Reading from the N-terminus, the 617-residue chain is Electron transfer flavoprotein-ubiquinone oxidoreductase, mitochondrial (617 aa).

A mitochondrion-targeting transit peptide spans Met-1–Trp-33. Val-71–Ala-85 contacts FAD. Residue Lys-96 is modified to N6-acetyllysine. The stretch at Ile-109–Asp-130 is an intramembrane region. Residues Lys-132 and Lys-223 each carry the N6-acetyllysine modification. A ubiquinone-binding residues include Gly-305 and Gly-306. An N6-acetyllysine modification is found at Lys-357. Residues Ile-428 to Glu-447 lie within the membrane without spanning it. Ser-551 carries the post-translational modification Phosphoserine. [4Fe-4S] cluster-binding residues include Cys-561, Cys-586, Cys-589, and Cys-592. In terms of domain architecture, 4Fe-4S ferredoxin-type spans Phe-577 to Pro-606.

It belongs to the ETF-QO/FixC family. Monomer. It depends on [4Fe-4S] cluster as a cofactor. FAD is required as a cofactor.

It localises to the mitochondrion inner membrane. It carries out the reaction a ubiquinone + reduced [electron-transfer flavoprotein] = a ubiquinol + oxidized [electron-transfer flavoprotein] + H(+). In terms of biological role, accepts electrons from ETF and reduces ubiquinone. The sequence is that of Electron transfer flavoprotein-ubiquinone oxidoreductase, mitochondrial (ETFDH) from Bos taurus (Bovine).